We begin with the raw amino-acid sequence, 158 residues long: 6,7-dimethyl-8-ribityllumazine synthase (158 aa).

5-amino-6-(D-ribitylamino)uracil is bound by residues Phe22, 56–58, and 80–82; these read ALE and VVI. 85–86 provides a ligand contact to (2S)-2-hydroxy-3-oxobutyl phosphate; the sequence is ET. His88 serves as the catalytic Proton donor. A 5-amino-6-(D-ribitylamino)uracil-binding site is contributed by Asn113. Arg127 is a binding site for (2S)-2-hydroxy-3-oxobutyl phosphate.

This sequence belongs to the DMRL synthase family.

The enzyme catalyses (2S)-2-hydroxy-3-oxobutyl phosphate + 5-amino-6-(D-ribitylamino)uracil = 6,7-dimethyl-8-(1-D-ribityl)lumazine + phosphate + 2 H2O + H(+). Its pathway is cofactor biosynthesis; riboflavin biosynthesis; riboflavin from 2-hydroxy-3-oxobutyl phosphate and 5-amino-6-(D-ribitylamino)uracil: step 1/2. Catalyzes the formation of 6,7-dimethyl-8-ribityllumazine by condensation of 5-amino-6-(D-ribitylamino)uracil with 3,4-dihydroxy-2-butanone 4-phosphate. This is the penultimate step in the biosynthesis of riboflavin. The protein is 6,7-dimethyl-8-ribityllumazine synthase of Neisseria gonorrhoeae (strain ATCC 700825 / FA 1090).